Reading from the N-terminus, the 174-residue chain is Transcriptional repressor NrdR (174 aa).

A zinc finger spans residues 3 to 34 (CPFCQHSDTRVIDSRVSEDGTTIRRRRECEAC). The 91-residue stretch at 49–139 (PTVVKSDGGR…VYRSFQDVAD (91 aa)) folds into the ATP-cone domain.

The protein belongs to the NrdR family. Zn(2+) is required as a cofactor.

Functionally, negatively regulates transcription of bacterial ribonucleotide reductase nrd genes and operons by binding to NrdR-boxes. This Xanthomonas oryzae pv. oryzae (strain MAFF 311018) protein is Transcriptional repressor NrdR.